The sequence spans 473 residues: Phosphatidylserine synthase 1 (473 aa).

Alanine 2 is subject to N-acetylalanine. The Cytoplasmic portion of the chain corresponds to 2 to 35 (ASCVGSRTLSKDDVNYRMHFRMINEQQVEDITID). The helical transmembrane segment at 36 to 56 (FFYRPHTITLLSFTIISLMYF) threads the bilayer. The Lumenal portion of the chain corresponds to 57–72 (AFTRDDCVPEDNIWRG). The chain crosses the membrane as a helical span at residues 73-93 (ILSVIFFFLIISVLAFPNGPF). Residues 94–102 (TRPHPALWR) are Cytoplasmic-facing. A helical membrane pass occupies residues 103 to 123 (MVFGLSVLYFLFLVFLLFLNF). Residues 124–186 (EQVKSLMYWL…AMKALLIRSY (63 aa)) lie on the Lumenal side of the membrane. A helical transmembrane segment spans residues 187–207 (GLCWTISITWELTELFFMHLL). At 208-216 (PNFAECWWD) the chain is on the cytoplasmic side. The chain crosses the membrane as a helical span at residues 217–237 (QVILDILLCNGGGIWLGMVVC). Residues 238–286 (RFLEMRTYHWASFKDIHTTTGKIKRAVLQFTPASWTYVRWFDPKSSFQR) lie on the Lumenal side of the membrane. A helical membrane pass occupies residues 287-307 (VAGIYLFMIIWQLTELNTFFL). Residues 308-319 (KHIFVFQASHPL) are Cytoplasmic-facing. A helical membrane pass occupies residues 320 to 342 (SWCRILFIGCITAPTVRQYYAYL). At 343–355 (TDTQCKRVGTQCW) the chain is on the lumenal side. The helical transmembrane segment at 356–376 (VFGVIGFLEAIVCIKFGQDLF) threads the bilayer. The Cytoplasmic portion of the chain corresponds to 377-383 (SKTQILY). Residues 384-404 (VVLWLLCVAFTTFLCLYGMVW) form a helical membrane-spanning segment. The Lumenal portion of the chain corresponds to 405–473 (YAEHYGHREK…SKVTNGVGKK (69 aa)). 4 positions are modified to phosphoserine: serine 417, serine 425, serine 442, and serine 454. The tract at residues 430–473 (WYHGKGSKGSEDSPPKHSNNNESHSSRRRNRHSKSKVTNGVGKK) is disordered. The span at 455 to 464 (SRRRNRHSKS) shows a compositional bias: basic residues.

Belongs to the phosphatidyl serine synthase family.

It is found in the endoplasmic reticulum membrane. The enzyme catalyses a 1,2-diacyl-sn-glycero-3-phosphoethanolamine + L-serine = a 1,2-diacyl-sn-glycero-3-phospho-L-serine + ethanolamine. It catalyses the reaction a 1,2-diacyl-sn-glycero-3-phosphocholine + L-serine = a 1,2-diacyl-sn-glycero-3-phospho-L-serine + choline. Its pathway is phospholipid metabolism; phosphatidylserine biosynthesis. Its function is as follows. Catalyzes a base-exchange reaction in which the polar head group of phosphatidylethanolamine (PE) or phosphatidylcholine (PC) is replaced by L-serine. Catalyzes mainly the conversion of phosphatidylcholine but also converts, in vitro and to a lesser extent, phosphatidylethanolamine. The chain is Phosphatidylserine synthase 1 (Ptdss1) from Rattus norvegicus (Rat).